Reading from the N-terminus, the 96-residue chain is Glutamyl-tRNA(Gln) amidotransferase subunit C (96 aa).

This sequence belongs to the GatC family. Heterotrimer of A, B and C subunits.

The enzyme catalyses L-glutamyl-tRNA(Gln) + L-glutamine + ATP + H2O = L-glutaminyl-tRNA(Gln) + L-glutamate + ADP + phosphate + H(+). It carries out the reaction L-aspartyl-tRNA(Asn) + L-glutamine + ATP + H2O = L-asparaginyl-tRNA(Asn) + L-glutamate + ADP + phosphate + 2 H(+). Allows the formation of correctly charged Asn-tRNA(Asn) or Gln-tRNA(Gln) through the transamidation of misacylated Asp-tRNA(Asn) or Glu-tRNA(Gln) in organisms which lack either or both of asparaginyl-tRNA or glutaminyl-tRNA synthetases. The reaction takes place in the presence of glutamine and ATP through an activated phospho-Asp-tRNA(Asn) or phospho-Glu-tRNA(Gln). The protein is Glutamyl-tRNA(Gln) amidotransferase subunit C of Deinococcus radiodurans (strain ATCC 13939 / DSM 20539 / JCM 16871 / CCUG 27074 / LMG 4051 / NBRC 15346 / NCIMB 9279 / VKM B-1422 / R1).